The following is a 486-amino-acid chain: 2-succinylbenzoate--CoA ligase (486 aa).

Belongs to the ATP-dependent AMP-binding enzyme family. MenE subfamily.

The enzyme catalyses 2-succinylbenzoate + ATP + CoA = 2-succinylbenzoyl-CoA + AMP + diphosphate. It participates in quinol/quinone metabolism; 1,4-dihydroxy-2-naphthoate biosynthesis; 1,4-dihydroxy-2-naphthoate from chorismate: step 5/7. Its pathway is quinol/quinone metabolism; menaquinone biosynthesis. Converts 2-succinylbenzoate (OSB) to 2-succinylbenzoyl-CoA (OSB-CoA). This chain is 2-succinylbenzoate--CoA ligase, found in Bacillus subtilis (strain 168).